Here is a 1681-residue protein sequence, read N- to C-terminus: Meiosis regulator and mRNA stability factor 1 (1681 aa).

In terms of domain architecture, NYN spans 340-477 (IGVFWDIENC…ALLHHAHELI (138 aa)). Disordered stretches follow at residues 576 to 595 (VNET…PKKV) and 638 to 717 (QMQS…DVVF). Over residues 638 to 647 (QMQSKSNKTS) the composition is skewed to polar residues. Positions 648–658 (QQEKDKKRNGD) are enriched in basic and acidic residues. A compositionally biased stretch (polar residues) spans 659–690 (KQGTLSQSSPLCTNQMLQTARNVGTDNTASKS). Positions 692–715 (QKRDDTTRKSNADSQKEQKNKEDV) are enriched in basic and acidic residues. One can recognise an RRM domain in the interval 779 to 858 (ADIQIGNLDY…KRIQVSLATG (80 aa)). 8 HTH OST-type domains span residues 863-937 (SLSL…SPMG), 991-1067 (SLKT…HNKP), 1087-1161 (QLIQ…LTHR), 1163-1238 (QVKR…IPKR), 1247-1321 (RTKQ…LTEM), 1323-1398 (RIKA…INRK), 1399-1472 (SLRS…SVQL), and 1474-1548 (SLYV…LKND). The segment covering 1637 to 1648 (EPSTQNICPQES) has biased composition (polar residues). Residues 1637–1662 (EPSTQNICPQESKSTKELPESPVKRQ) are disordered. Positions 1649-1659 (KSTKELPESPV) are enriched in basic and acidic residues.

The protein resides in the peroxisome. Functionally, essential regulator of oogenesis required for female meiotic progression to repress transposable elements and preventing their mobilization, which is essential for the germline integrity. The chain is Meiosis regulator and mRNA stability factor 1 from Xenopus tropicalis (Western clawed frog).